The following is a 240-amino-acid chain: Probable transcriptional regulatory protein Nmul_A2722 (240 aa).

This sequence belongs to the TACO1 family.

It localises to the cytoplasm. This Nitrosospira multiformis (strain ATCC 25196 / NCIMB 11849 / C 71) protein is Probable transcriptional regulatory protein Nmul_A2722.